The following is a 244-amino-acid chain: 23S rRNA (guanosine-2'-O-)-methyltransferase RlmB (244 aa).

The S-adenosyl-L-methionine site is built by Gly-196, Ile-216, and Leu-225.

Belongs to the class IV-like SAM-binding methyltransferase superfamily. RNA methyltransferase TrmH family. RlmB subfamily. Homodimer.

It is found in the cytoplasm. It carries out the reaction guanosine(2251) in 23S rRNA + S-adenosyl-L-methionine = 2'-O-methylguanosine(2251) in 23S rRNA + S-adenosyl-L-homocysteine + H(+). In terms of biological role, specifically methylates the ribose of guanosine 2251 in 23S rRNA. This Pectobacterium atrosepticum (strain SCRI 1043 / ATCC BAA-672) (Erwinia carotovora subsp. atroseptica) protein is 23S rRNA (guanosine-2'-O-)-methyltransferase RlmB.